Here is an 82-residue protein sequence, read N- to C-terminus: High-potential iron-sulfur protein (82 aa).

Cysteine 42, cysteine 45, cysteine 60, and cysteine 74 together coordinate [4Fe-4S] cluster.

Belongs to the high-potential iron-sulfur protein (HiPIP) family. In terms of assembly, homodimer.

It is found in the periplasm. Functionally, specific class of high-redox-potential 4Fe-4S ferredoxins. Functions in anaerobic electron transport in most purple and in some other photosynthetic bacteria and in at least one genus (Paracoccus) of halophilic, denitrifying bacteria. This Marichromatium purpuratum (Chromatium purpuratum) protein is High-potential iron-sulfur protein (hip).